Consider the following 309-residue polypeptide: Pyridoxal 5'-phosphate synthase subunit PDX1.1 (309 aa).

Methionine 1 is subject to N-acetylmethionine. Aspartate 41 contributes to the D-ribose 5-phosphate binding site. The Schiff-base intermediate with D-ribose 5-phosphate role is filled by lysine 98. Glycine 170 contacts D-ribose 5-phosphate. Residue arginine 182 coordinates D-glyceraldehyde 3-phosphate. D-ribose 5-phosphate is bound by residues glycine 231 and 252-253 (GS).

This sequence belongs to the PdxS/SNZ family. In terms of assembly, homodimer or heterodimer with PDX1.2 or PDX1.3. Interacts with PDX2. In terms of tissue distribution, expressed in flowers, shoots, leaves and weakly in roots.

Its subcellular location is the cytoplasm. It carries out the reaction aldehydo-D-ribose 5-phosphate + D-glyceraldehyde 3-phosphate + L-glutamine = pyridoxal 5'-phosphate + L-glutamate + phosphate + 3 H2O + H(+). Its pathway is cofactor biosynthesis; pyridoxal 5'-phosphate biosynthesis. Functionally, catalyzes the formation of pyridoxal 5'-phosphate from ribose 5-phosphate (RBP), glyceraldehyde 3-phosphate (G3P) and ammonia. The ammonia is provided by PDX2. Can also use ribulose 5-phosphate and dihydroxyacetone phosphate as substrates, resulting from enzyme-catalyzed isomerization of RBP and G3P, respectively. Also plays an indirect role in resistance to singlet oxygen-generating photosensitizers. The protein is Pyridoxal 5'-phosphate synthase subunit PDX1.1 (PDX11) of Arabidopsis thaliana (Mouse-ear cress).